The primary structure comprises 468 residues: ATP synthase subunit beta (468 aa).

ATP is bound at residue 155 to 162 (GGAGVGKT).

Belongs to the ATPase alpha/beta chains family. In terms of assembly, F-type ATPases have 2 components, CF(1) - the catalytic core - and CF(0) - the membrane proton channel. CF(1) has five subunits: alpha(3), beta(3), gamma(1), delta(1), epsilon(1). CF(0) has three main subunits: a(1), b(2) and c(9-12). The alpha and beta chains form an alternating ring which encloses part of the gamma chain. CF(1) is attached to CF(0) by a central stalk formed by the gamma and epsilon chains, while a peripheral stalk is formed by the delta and b chains.

The protein localises to the cell membrane. The enzyme catalyses ATP + H2O + 4 H(+)(in) = ADP + phosphate + 5 H(+)(out). In terms of biological role, produces ATP from ADP in the presence of a proton gradient across the membrane. The catalytic sites are hosted primarily by the beta subunits. This is ATP synthase subunit beta from Streptococcus pyogenes serotype M6 (strain ATCC BAA-946 / MGAS10394).